The chain runs to 187 residues: Protein GrpE (187 aa).

The disordered stretch occupies residues 1 to 25 (MADEQNLDNRAPEETPAAEGTSAGE).

Belongs to the GrpE family. As to quaternary structure, homodimer.

It is found in the cytoplasm. Its function is as follows. Participates actively in the response to hyperosmotic and heat shock by preventing the aggregation of stress-denatured proteins, in association with DnaK and GrpE. It is the nucleotide exchange factor for DnaK and may function as a thermosensor. Unfolded proteins bind initially to DnaJ; upon interaction with the DnaJ-bound protein, DnaK hydrolyzes its bound ATP, resulting in the formation of a stable complex. GrpE releases ADP from DnaK; ATP binding to DnaK triggers the release of the substrate protein, thus completing the reaction cycle. Several rounds of ATP-dependent interactions between DnaJ, DnaK and GrpE are required for fully efficient folding. The chain is Protein GrpE from Azotobacter vinelandii (strain DJ / ATCC BAA-1303).